The sequence spans 692 residues: MAREFSLAKTRNIGIMAHVDAGKTTTTERILYYTGKIHKIGETHEGASQMDWMEQEQERGITITSAATTAQWDGHRVNIIDTPGHVDFTIEVQRSLRVLDGAVTVLDSQSGVEPQTETVWRQATEYGVPRIVFANKMDKIGADFLYSVQTLHDRLQANAHPIQLPIGSEDDFRGIIDLIKMKAEIYTNDLGTDILEEDIPDEYLEQAQEYREKLIEAVAETDEDLMMKYLEGEEITNEELVAGIRKATINVEFFPVLCGSAFKNKGVQLMLDAVIAYLPSPLDIPAIKGVNPDTDAEEERPASDEEPFAALAFKIMTDPFVGRLTFFRVYSGVLNSGSYVMNTSKGKRERIGRILQMHANSRQEIETVYAGDIAAAVGLKDTTTGDSLTDEKAKIILESIEVPEPVIQLMVEPKSKADQDKMGIALQKLAEEDPTFRVETNVETGETVIAGMGELHLDVLVDRMRREFKVEANVGAPQVSYRETFRASTQARGFFKRQSGGKGQFGDVWIEFTPNEEGKGFEFENAIVGGVVPREFIPAVEKGLIESMANGVLAGYPMVDVKAKLYDGSYHDVDSSETAFKIAASLALKEAAKTAQPAILEPMMLVTITAPEDNLGDVMGHVTARRGRVDGMEAHGTSQIVRAYVPLAEMFGYATVLRSATQGRGTFMMVFDHYEDVPKSVQEEIIKKNKGE.

The 275-residue stretch at 8–282 folds into the tr-type G domain; it reads AKTRNIGIMA…AVIAYLPSPL (275 aa). GTP contacts are provided by residues 17 to 24, 81 to 85, and 135 to 138; these read AHVDAGKT, DTPGH, and NKMD.

It belongs to the TRAFAC class translation factor GTPase superfamily. Classic translation factor GTPase family. EF-G/EF-2 subfamily.

The protein resides in the cytoplasm. Its function is as follows. Catalyzes the GTP-dependent ribosomal translocation step during translation elongation. During this step, the ribosome changes from the pre-translocational (PRE) to the post-translocational (POST) state as the newly formed A-site-bound peptidyl-tRNA and P-site-bound deacylated tRNA move to the P and E sites, respectively. Catalyzes the coordinated movement of the two tRNA molecules, the mRNA and conformational changes in the ribosome. The protein is Elongation factor G of Streptococcus equi subsp. zooepidemicus (strain MGCS10565).